Consider the following 452-residue polypeptide: MAKNMAPILHILVISLSYSFLFVTSSSQNSQSLYHNSQPTSSSKPNLLVLPIQQDASTKLHWGNILKRTPLMQVPVLLDLNGKHLWVTCSQHYSSSTYQAPFCHSTQCSRANTHQCFTCTDSTTSRPGCHNNTCGLISSNPVTQESGLGELAQDVLALHSTHGSKLGSLVKIPQFLFSCAPTFLTQKGLPNNVQGALGLGHAPISLPNQLFSHFGLKRQFTMCLSSYPTSNGAILFGDINDPNNNNYIHNSLDVLHDMVYTPLTISKQGEYFIQVSAIRVNKHMVIPTKNPSMFPSSSSSSYHESSEIGGAMITTTNPYTVLRHSIFEVFTQVFANNVPKQAQVKAVGPFGLCYDTKKISGGVPSVDLIMDKSDVVWRISGENLMVQAQDGVSCLGFVDGGVHTRAGIALGTHQLEENLVVFDLARSRVGFNTNSLKSHGKSCSNLFDLNNP.

The signal sequence occupies residues 1-33 (MAKNMAPILHILVISLSYSFLFVTSSSQNSQSL). In terms of domain architecture, Peptidase A1 spans 61–432 (HWGNILKRTP…DLARSRVGFN (372 aa)). 5 disulfides stabilise this stretch: C89-C179, C103-C116, C108-C134, C119-C129, and C353-C394. An N-linked (GlcNAc...) asparagine glycan is attached at N131.

It belongs to the peptidase A1 family. In terms of assembly, two-subunit monomeric unit made of alpha and beta subunits coupled by disulfide bonds (at pH 4.5 and under non-reducing conditions). Monomeric alpha and beta subunits in reducing conditions. Can also form oligomers including dimer, tetramer and cyclic hexamer (trimer of dimers) (at pH &gt; 5.5). Component of globulins complexes which accumulate in seeds. Interacts with flavonoids (e.g. apigenin glucosides) present in globulins complexes. In terms of processing, glycosylated on alpha chain at Asn-131; identified N-glycans bound are Man(2)(Xyl)(Fuc)GlcNAc(2), Man(3)(Xyl)(Fuc)GlcNAc(2), GlcNAcMan(3)(Xyl)(Fuc)GlcNAc(2) and GlcNAc(2)Man(3)(Xyl)(Fuc)GlcNAc(2). Expressed in developing seeds and in the young roots and cotyledons of germinating seeds and young seedlings.

The protein resides in the secreted. It is found in the extracellular space. Sulfur-rich seed storage protein that remains undegraded at germination. The uncleaved form exhibits some inhibitory activity against GH11 xylanase from T.longibrachiatum, more at pH 7 than at pH 5.3, but not against GH12 xyloglucan-specific endoglucanase (XEG) from A.aculeatus. Binds to model phospholipid membranes containing dimyristoyl phosphatidylglycerol (DMPG), dioleoyl phosphatidic acid (DOPA) or mixture of dimyristoyl phosphatidylcholine and dimyristoyl phosphatidylglycerol (DMPC:DMPG), or mixture of dioleoyl phosphatidic acid and dioleoyl phosphatidylcholine (DOPC:DOPA). This chain is Gamma conglutin 1, found in Lupinus albus (White lupine).